We begin with the raw amino-acid sequence, 206 residues long: MTDSNGQKDNNQDQAQPADPVVSKPYIMPDDPEEGTNEALVREAAEARDKMLRTLAEMENLRRRTAKEVADARTYGVSAFARDVLEIADNLQRALDAVPAEARANADAGLKGLIEGVELTERSLINALEKNGVKKFDPQGEKFDPNFQQAMYEVPDPSVPAGTVVQVVQAGFMIGERVLRPALVGVSKGGAKPAPAAANGNEGGVA.

The span at Met1–Ala15 shows a compositional bias: polar residues. The segment at Met1–Glu38 is disordered.

It belongs to the GrpE family. In terms of assembly, homodimer.

Its subcellular location is the cytoplasm. In terms of biological role, participates actively in the response to hyperosmotic and heat shock by preventing the aggregation of stress-denatured proteins, in association with DnaK and GrpE. It is the nucleotide exchange factor for DnaK and may function as a thermosensor. Unfolded proteins bind initially to DnaJ; upon interaction with the DnaJ-bound protein, DnaK hydrolyzes its bound ATP, resulting in the formation of a stable complex. GrpE releases ADP from DnaK; ATP binding to DnaK triggers the release of the substrate protein, thus completing the reaction cycle. Several rounds of ATP-dependent interactions between DnaJ, DnaK and GrpE are required for fully efficient folding. This Rhodopseudomonas palustris (strain BisB5) protein is Protein GrpE.